Here is a 29-residue protein sequence, read N- to C-terminus: Cytochrome b6-f complex subunit 8 (29 aa).

A helical membrane pass occupies residues 3–23; sequence IVSLGWAFLMVVFSFSLSLVV.

This sequence belongs to the PetN family. In terms of assembly, the 4 large subunits of the cytochrome b6-f complex are cytochrome b6, subunit IV (17 kDa polypeptide, PetD), cytochrome f and the Rieske protein, while the 4 small subunits are PetG, PetL, PetM and PetN. The complex functions as a dimer.

The protein resides in the plastid. It localises to the chloroplast thylakoid membrane. Functionally, component of the cytochrome b6-f complex, which mediates electron transfer between photosystem II (PSII) and photosystem I (PSI), cyclic electron flow around PSI, and state transitions. The polypeptide is Cytochrome b6-f complex subunit 8 (Chlorokybus atmophyticus (Soil alga)).